Consider the following 87-residue polypeptide: U3-theraphotoxin-Cg1b (87 aa).

The first 23 residues, methionine 1 to alanine 23, serve as a signal peptide directing secretion. Residues glutamate 24 to arginine 48 constitute a propeptide that is removed on maturation. 3 disulfide bridges follow: cysteine 52/cysteine 65, cysteine 56/cysteine 79, and cysteine 73/cysteine 84.

Belongs to the neurotoxin 12 (Hwtx-2) family. 03 (juruin) subfamily. As to expression, expressed by the venom gland.

Its subcellular location is the secreted. Functionally, probable ion channel inhibitor. This chain is U3-theraphotoxin-Cg1b, found in Chilobrachys guangxiensis (Chinese earth tiger tarantula).